We begin with the raw amino-acid sequence, 258 residues long: Imidazole glycerol phosphate synthase subunit HisF (258 aa).

Catalysis depends on residues Asp-12 and Asp-131.

It belongs to the HisA/HisF family. As to quaternary structure, heterodimer of HisH and HisF.

The protein localises to the cytoplasm. It catalyses the reaction 5-[(5-phospho-1-deoxy-D-ribulos-1-ylimino)methylamino]-1-(5-phospho-beta-D-ribosyl)imidazole-4-carboxamide + L-glutamine = D-erythro-1-(imidazol-4-yl)glycerol 3-phosphate + 5-amino-1-(5-phospho-beta-D-ribosyl)imidazole-4-carboxamide + L-glutamate + H(+). It participates in amino-acid biosynthesis; L-histidine biosynthesis; L-histidine from 5-phospho-alpha-D-ribose 1-diphosphate: step 5/9. In terms of biological role, IGPS catalyzes the conversion of PRFAR and glutamine to IGP, AICAR and glutamate. The HisF subunit catalyzes the cyclization activity that produces IGP and AICAR from PRFAR using the ammonia provided by the HisH subunit. The polypeptide is Imidazole glycerol phosphate synthase subunit HisF (Sinorhizobium fredii (strain NBRC 101917 / NGR234)).